We begin with the raw amino-acid sequence, 64 residues long: Prokaryotic ubiquitin-like protein Pup (64 aa).

The tract at residues 1–37 (MAQEQTKRGGGGGEDDDLSGGAGAGQERREKLAEETD) is disordered. Residues 21-58 (GAGAGQERREKLAEETDDLLDEIDDVLEENAEDFVRAY) are ARC ATPase binding. Residues 24–52 (AGQERREKLAEETDDLLDEIDDVLEENAE) adopt a coiled-coil conformation. Deamidated glutamine is present on Gln-64. Gln-64 participates in a covalent cross-link: Isoglutamyl lysine isopeptide (Gln-Lys) (interchain with K-? in acceptor proteins).

It belongs to the prokaryotic ubiquitin-like protein family. In terms of assembly, strongly interacts with the proteasome-associated ATPase ARC through a hydrophobic interface; the interacting region of Pup lies in its C-terminal half. There is one Pup binding site per ARC hexamer ring. Post-translationally, is modified by deamidation of its C-terminal glutamine to glutamate by the deamidase Dop, a prerequisite to the subsequent pupylation process.

It participates in protein degradation; proteasomal Pup-dependent pathway. In terms of biological role, protein modifier that is covalently attached to lysine residues of substrate proteins, thereby targeting them for proteasomal degradation. The tagging system is termed pupylation. This chain is Prokaryotic ubiquitin-like protein Pup, found in Mycobacterium sp. (strain JLS).